The sequence spans 222 residues: MNRSLYRTRIKFCGMTRAGDIRLAGELGVDAVGFIFAHGSPRRVAPAEARAMRQATAPMVDVVALFRNNSKEEVREVVRTVRPTLLQFHGEEEDAFCRSFNLPYLKAVPMGSTGVNGEDANARTLQLSYPNTAGFLFDSHAPGAGGGTGKTFDWSRLPTGLHRPFLLAGGINAGNVFDAIVATLPWGVDVSSGVELAPGIKDGHKMRKFVEEVRRADCHEMS.

This sequence belongs to the TrpF family.

The catalysed reaction is N-(5-phospho-beta-D-ribosyl)anthranilate = 1-(2-carboxyphenylamino)-1-deoxy-D-ribulose 5-phosphate. It participates in amino-acid biosynthesis; L-tryptophan biosynthesis; L-tryptophan from chorismate: step 3/5. This chain is N-(5'-phosphoribosyl)anthranilate isomerase, found in Xanthomonas oryzae pv. oryzae (strain PXO99A).